The following is a 169-amino-acid chain: uncharacterized protein (169 aa).

In terms of domain architecture, Nudix hydrolase spans 32 to 162 (CNFRVVNSFV…EPAKSDLIKL (131 aa)). The Nudix box motif lies at 69–91 (GGHVESGETYEDALQRELEEELN). E85 and E89 together coordinate Mg(2+).

The protein belongs to the Nudix hydrolase family. Requires Mg(2+) as cofactor.

This is an uncharacterized protein from Nostoc sp. (strain PCC 7120 / SAG 25.82 / UTEX 2576).